Consider the following 322-residue polypeptide: Ribose-phosphate pyrophosphokinase 1 (322 aa).

ATP is bound by residues 39–41 and 98–99; these read DGE and RQ. Positions 132 and 173 each coordinate Mg(2+). Lys-196 is a catalytic residue. D-ribose 5-phosphate is bound by residues Arg-198, Asp-224, and 228-232; that span reads DTAGT.

It belongs to the ribose-phosphate pyrophosphokinase family. Class I subfamily. As to quaternary structure, homohexamer. The cofactor is Mg(2+).

The protein localises to the cytoplasm. It carries out the reaction D-ribose 5-phosphate + ATP = 5-phospho-alpha-D-ribose 1-diphosphate + AMP + H(+). The protein operates within metabolic intermediate biosynthesis; 5-phospho-alpha-D-ribose 1-diphosphate biosynthesis; 5-phospho-alpha-D-ribose 1-diphosphate from D-ribose 5-phosphate (route I): step 1/1. In terms of biological role, involved in the biosynthesis of the central metabolite phospho-alpha-D-ribosyl-1-pyrophosphate (PRPP) via the transfer of pyrophosphoryl group from ATP to 1-hydroxyl of ribose-5-phosphate (Rib-5-P). This chain is Ribose-phosphate pyrophosphokinase 1, found in Streptococcus pneumoniae serotype 4 (strain ATCC BAA-334 / TIGR4).